Here is a 156-residue protein sequence, read N- to C-terminus: Ribosomal RNA large subunit methyltransferase H (156 aa).

Residues L73, G104, and 123 to 128 (ISSMTL) contribute to the S-adenosyl-L-methionine site.

Belongs to the RNA methyltransferase RlmH family. In terms of assembly, homodimer.

It localises to the cytoplasm. The enzyme catalyses pseudouridine(1915) in 23S rRNA + S-adenosyl-L-methionine = N(3)-methylpseudouridine(1915) in 23S rRNA + S-adenosyl-L-homocysteine + H(+). Functionally, specifically methylates the pseudouridine at position 1915 (m3Psi1915) in 23S rRNA. This Burkholderia cenocepacia (strain HI2424) protein is Ribosomal RNA large subunit methyltransferase H.